We begin with the raw amino-acid sequence, 61 residues long: Small ribosomal subunit protein uS14B (61 aa).

Positions 24, 27, 40, and 43 each coordinate Zn(2+).

The protein belongs to the universal ribosomal protein uS14 family. Zinc-binding uS14 subfamily. In terms of assembly, part of the 30S ribosomal subunit. Contacts proteins S3 and S10. It depends on Zn(2+) as a cofactor.

In terms of biological role, binds 16S rRNA, required for the assembly of 30S particles and may also be responsible for determining the conformation of the 16S rRNA at the A site. In Cutibacterium acnes (strain DSM 16379 / KPA171202) (Propionibacterium acnes), this protein is Small ribosomal subunit protein uS14B.